The following is a 216-amino-acid chain: LexA repressor (216 aa).

The H-T-H motif DNA-binding region spans 28–48 (RAEIAAELGFSSANSAEEHLR). Catalysis depends on for autocatalytic cleavage activity residues S134 and K171.

This sequence belongs to the peptidase S24 family. Homodimer.

It carries out the reaction Hydrolysis of Ala-|-Gly bond in repressor LexA.. Its function is as follows. Represses a number of genes involved in the response to DNA damage (SOS response), including recA and lexA. In the presence of single-stranded DNA, RecA interacts with LexA causing an autocatalytic cleavage which disrupts the DNA-binding part of LexA, leading to derepression of the SOS regulon and eventually DNA repair. The chain is LexA repressor from Paraburkholderia xenovorans (strain LB400).